We begin with the raw amino-acid sequence, 718 residues long: GMP synthase [glutamine-hydrolyzing] (718 aa).

The Glutamine amidotransferase type-1 domain maps to 43–247 (VIVILDAGSQ…LIDICGCSAN (205 aa)). Residues Cys-128, His-221, and Glu-223 each act as for GATase activity in the active site. The region spanning 248–457 (YTLDDREQQA…LGLSDSLVWR (210 aa)) is the GMPS ATP-PPase domain. 275 to 281 (SGGVDST) lines the ATP pocket.

Homodimer.

It carries out the reaction XMP + L-glutamine + ATP + H2O = GMP + L-glutamate + AMP + diphosphate + 2 H(+). Its pathway is purine metabolism; GMP biosynthesis; GMP from XMP (L-Gln route): step 1/1. This chain is GMP synthase [glutamine-hydrolyzing] (guaA), found in Dictyostelium discoideum (Social amoeba).